The sequence spans 281 residues: MIENRRGLDIFSHVMLIVGILAVLFPLYVGFVAATLDNQEVFQAPMTLIPGSHLWGNLRDIWLHGAGNNTTPFGLMLLNSFVMALAITVGKITVSILSAYAIVYFRFPLRNLFFWMIFLTLMLPVEVRIFPTVEVIARLDMMDSYTGLTLPLMASATATFLFRQFFMTLPDELMEAARIDGASPMRFFFDMVLPLSKTNLAALFVITFIYGWNQYLWPLLIVSDANLGTAVAGIKSMIASGDGATQWNQVMAAMLLTMLPPLLVVLLMQRWFVRGLVDSEK.

Transmembrane regions (helical) follow at residues 14-34 (VMLI…FVAA), 85-105 (LAIT…IVYF), 113-133 (FFWM…FPTV), 142-162 (MDSY…TFLF), 188-210 (FFDM…TFIY), and 247-267 (WNQV…VVLL). The 192-residue stretch at 77–268 (LLNSFVMALA…LPPLLVVLLM (192 aa)) folds into the ABC transmembrane type-1 domain.

It belongs to the binding-protein-dependent transport system permease family. UgpAE subfamily. In terms of assembly, the complex is composed of two ATP-binding proteins (UgpC), two transmembrane proteins (UgpA and UgpE) and a solute-binding protein (UgpB).

Its subcellular location is the cell inner membrane. Part of the ABC transporter complex UgpBAEC involved in sn-glycerol-3-phosphate (G3P) import. Probably responsible for the translocation of the substrate across the membrane. In Pectobacterium atrosepticum (strain SCRI 1043 / ATCC BAA-672) (Erwinia carotovora subsp. atroseptica), this protein is sn-glycerol-3-phosphate transport system permease protein UgpE (ugpE).